The sequence spans 531 residues: Peptide chain release factor 3 (531 aa).

Residues 10 to 278 form the tr-type G domain; sequence RRRRTFAIIS…SLIEWAPAPK (269 aa). Residues 19 to 26, 87 to 91, and 141 to 144 each bind GTP; these read SHPDAGKT, DTPGH, and NKYD.

Belongs to the TRAFAC class translation factor GTPase superfamily. Classic translation factor GTPase family. PrfC subfamily.

The protein resides in the cytoplasm. Increases the formation of ribosomal termination complexes and stimulates activities of RF-1 and RF-2. It binds guanine nucleotides and has strong preference for UGA stop codons. It may interact directly with the ribosome. The stimulation of RF-1 and RF-2 is significantly reduced by GTP and GDP, but not by GMP. This Neisseria meningitidis serogroup A / serotype 4A (strain DSM 15465 / Z2491) protein is Peptide chain release factor 3.